An 804-amino-acid polypeptide reads, in one-letter code: General transcription and DNA repair factor IIH helicase/translocase subunit XPB (804 aa).

Disordered stretches follow at residues 1 to 61 (MSLK…NSNE) and 220 to 255 (QSSKQKSSKPSNEDNVEDKKDITNDSSKETAEKSSS). Over residues 14 to 36 (PDEDLEEYSDYSDVDNYGEEDDD) the composition is skewed to acidic residues. 2 stretches are compositionally biased toward low complexity: residues 47–60 (NNNKTKAQTTTNSN) and 220–229 (QSSKQKSSKP). Positions 236-255 (EDKKDITNDSSKETAEKSSS) are enriched in basic and acidic residues. The Helicase ATP-binding domain occupies 335–497 (MFGNGRARSG…DLNFLIGPKM (163 aa)). 348–355 (LPCGAGKT) is a binding site for ATP. The DEVH box signature appears at 450 to 453 (DEVH). Residues 551 to 705 (QACQFLIDYH…KVITNLKGME (155 aa)) form the Helicase C-terminal domain. 2 disordered regions span residues 736–761 (DDGEDTSFGSRSLSRAPAKAKRSSGS) and 782–804 (KQLKKDSKEHHALFRKHLYTKRR). The segment covering 784–793 (LKKDSKEHHA) has biased composition (basic and acidic residues). Residues 794-804 (LFRKHLYTKRR) show a composition bias toward basic residues.

It belongs to the helicase family. RAD25/XPB subfamily. Component of the 7-subunit TFIIH core complex composed of XPB/ptr8, XPD/rad15, ssl1, tfb1, tfb2, tfb4 and tfb5, which is active in NER. The core complex associates with the 3-subunit CTD-kinase module TFIIK composed of mcs2/cyclin H, mcs6/cdk7 and pmh1/tfb3 to form the 10-subunit holoenzyme (holo-TFIIH) active in transcription.

The protein localises to the nucleus. It carries out the reaction Couples ATP hydrolysis with the unwinding of duplex DNA by translocating in the 3'-5' direction.. The catalysed reaction is ATP + H2O = ADP + phosphate + H(+). Its function is as follows. Probable ATP-dependent 3'-5' DNA helicase/translocase. Binds dsDNA rather than ssDNA, unzipping it in a translocase rather than classical helicase activity. Component of the general transcription and DNA repair factor IIH (TFIIH) core complex. When complexed to CDK-activating kinase (CAK), involved in RNA transcription by RNA polymerase II. Also involved in transcription-coupled nucleotide excision repair (NER) of damaged DNA. In NER, TFIIH acts by opening DNA around the lesion to allow the excision of the damaged oligonucleotide and its replacement by a new DNA fragment. The ATPase activity of XPB/ptr8, but not its helicase activity, is required for DNA opening. In transcription, TFIIH has an essential role in transcription initiation. When the pre-initiation complex (PIC) has been established, TFIIH is required for promoter opening and promoter escape. The ATP-dependent helicase activity of XPB/ptr8 is required for promoter escape but not for promoter opening. Plays a role in mRNA export. In Schizosaccharomyces pombe (strain 972 / ATCC 24843) (Fission yeast), this protein is General transcription and DNA repair factor IIH helicase/translocase subunit XPB.